We begin with the raw amino-acid sequence, 77 residues long: MPTKAGTKSTANKKTTKGPSKSGSAKGHTGKTHATALHHGMLYKDMVNIAKSKGIPIYQNGSRLTKSELEKKIKRSK.

Over residues 1–12 (MPTKAGTKSTAN) the composition is skewed to polar residues. A disordered region spans residues 1–38 (MPTKAGTKSTANKKTTKGPSKSGSAKGHTGKTHATALH). Low complexity predominate over residues 17-27 (KGPSKSGSAKG).

It belongs to the asfivirus P10 family.

Its subcellular location is the virion. May play a role in genome packaging through direct interaction with viral DNA. Binds to ssDNA and dsDNA with the same apparent affinity in vitro. The polypeptide is Structural DNA-binding protein p10 (Ornithodoros (relapsing fever ticks)).